Consider the following 1441-residue polypeptide: MASLAALALSLLLRLQLPPLPGARAQSAAGGCSFDEHYSNCGYSVALGTNGFTWEQINTWEKPMLDQAVPTGSFMMVNSSGRASGQKAHLLLPTLKENDTHCIDFHYYFSSRDRSSPGALNVYVKVNGGPQGNPVWNVSGVVTEGWVKAELAISTFWPHFYQVIFESVSLKGHPGYIAVDEVRVLAHPCRKAPHFLRLQNVEVNVGQNATFQCIAGGKWSQHDKLWLQQWNGRDTALMVTRVVNHRRFSATVSVADTAQRSVSKYRCVIRSDGGSGVSNYAELIVKEPPTPIAPPELLAVGATYLWIKPNANSIIGDGPIILKEVEYRTTTGTWAETHIVDSPNYKLWHLDPDVEYEIRVLLTRPGEGGTGPPGPPLTTRTKCADPVHGPQNVEIVDIRARQLTLQWEPFGYAVTRCHSYNLTVQYQYVFNQQQYEAEEVIQTSSHYTLRGLRPFMTIRLRLLLSNPEGRMESEELVVQTEEDVPGAVPLESIQGGPFEEKIYIQWKPPNETNGVITLYEINYKAVGSLDPSADLSSQRGKVFKLRNETHHLFVGLYPGTTYSFTIKASTAKGFGPPVTTRIATKISAPSMPEYDTDTPLNETDTTITVMLKPAQSRGAPVSVYQLVVKEERLQKSRRAADIIECFSVPVSYRNASSLDSLHYFAAELKPANLPVTQPFTVGDNKTYNGYWNPPLSPLKSYSIYFQALSKANGETKINCVRLATKGASTQNSNTVEPEKQVDNTVKMAGVIAGLLMFIIILLGVMLTIKRRRNAYSYSYYLKLAKKQKETQSGAQREMGPVASADKPTTKLSASRNDEGFSSSSQDVNGFTDGSRGELSQPTLTIQTHPYRTCDPVEMSYPRDQFQPAIRVADLLQHITQMKRGQGYGFKEEYEALPEGQTASWDTAKEDENRNKNRYGNIISYDHSRVRLLVLDGDPHSDYINANYIDGYHRPRHYIATQGPMQETVKDFWRMIWQENSASIVMVTNLVEVGRVKCVRYWPDDTEVYGDIKVTLIETEPLAEYVIRTFTVQKKGYHEIRELRLFHFTSWPDHGVPCYATGLLGFVRQVKFLNPPEAGPIVVHCSAGAGRTGCFIAIDTMLDMAENEGVVDIFNCVRELRAQRVNLVQTEEQYVFVHDAILEACLCGNTAIPVCEFRSLYYNISRLDPQTNSSQIKDEFQTLNIVTPRVRPEDCSIGLLPRNHDKNRSMDVLPLDRCLPFLISVDGESSNYINAALMDSHKQPAAFVVTQHPLPNTVADFWRLVFDYNCSSVVMLNEMDTAQFCMQYWPEKTSGCYGPIQVEFVSADIDEDIIHRIFRICNMARPQDGYRIVQHLQYIGWPAYRDTPPSKRSLLKVVRRLEKWQEQYDGREGRTVVHCLNGGGRSGTFCAICSVCEMIQQQNIIDVFHIVKTLRNNKSNMVETLEQYKFVYEVALEYLSSF.

Positions 1-25 (MASLAALALSLLLRLQLPPLPGARA) are cleaved as a signal peptide. Residues 26–747 (QSAAGGCSFD…EKQVDNTVKM (722 aa)) lie on the Extracellular side of the membrane. One can recognise an MAM domain in the interval 30 to 191 (GGCSFDEHYS…VRVLAHPCRK (162 aa)). N-linked (GlcNAc...) asparagine glycosylation is found at N78, N98, N137, and N208. Positions 193–284 (PHFLRLQNVE…SGVSNYAELI (92 aa)) constitute an Ig-like C2-type domain. C213 and C267 are oxidised to a cystine. 4 Fibronectin type-III domains span residues 291–384 (PIAP…TKCA), 389–483 (GPQN…TEED), 484–590 (VPGA…SAPS), and 591–726 (MPEY…ATKG). N-linked (GlcNAc...) asparagine glycans are attached at residues N421, N510, N547, N601, N654, and N684. Residues 748–768 (AGVIAGLLMFIIILLGVMLTI) traverse the membrane as a helical segment. The Cytoplasmic portion of the chain corresponds to 769-1441 (KRRRNAYSYS…EVALEYLSSF (673 aa)). A disordered region spans residues 790–839 (TQSGAQREMGPVASADKPTTKLSASRNDEGFSSSSQDVNGFTDGSRGELS). Positions 809 to 828 (TKLSASRNDEGFSSSSQDVN) are enriched in polar residues. Tyrosine-protein phosphatase domains are found at residues 889-1143 (FKEE…ILEA) and 1175-1437 (IKDE…ALEY). Residues D1052, 1084-1090 (CSAGAGR), and Q1128 contribute to the substrate site. The active-site Phosphocysteine intermediate is the C1084. S1208 carries the post-translational modification Phosphoserine. C1378 (phosphocysteine intermediate) is an active-site residue.

This sequence belongs to the protein-tyrosine phosphatase family. Receptor class 2B subfamily. Expressed in colon, lung, heart and testis, as well as in fetal and adult brain. Not detected in muscle and peripheral blood leukocytes.

It is found in the membrane. It catalyses the reaction O-phospho-L-tyrosyl-[protein] + H2O = L-tyrosyl-[protein] + phosphate. May be involved in both signal transduction and cellular adhesion in the CNS. In Homo sapiens (Human), this protein is Receptor-type tyrosine-protein phosphatase T (PTPRT).